Reading from the N-terminus, the 115-residue chain is Large ribosomal subunit protein bL19 (115 aa).

It belongs to the bacterial ribosomal protein bL19 family.

This protein is located at the 30S-50S ribosomal subunit interface and may play a role in the structure and function of the aminoacyl-tRNA binding site. The polypeptide is Large ribosomal subunit protein bL19 (Sodalis glossinidius (strain morsitans)).